A 302-amino-acid chain; its full sequence is Protein transport protein SEC13 homolog B (302 aa).

WD repeat units lie at residues 9 to 48 (GHEDIVHDVQMDYYGKRIATASSDCTIKITGVSNNGGSQQ), 54 to 95 (GHRG…QWTQ), 101 to 142 (DHKS…GWDT), 148 to 201 (AHPV…WKMD), 208 to 251 (KHTD…EQWE), and 257 to 296 (DFMTPVWRVSWSLTGNLLAVSDGNNNVTVWKEAVDGEWEQ).

It belongs to the WD repeat SEC13 family. Part of the nuclear pore complex (NPC). The NPC has an eight-fold symmetrical structure comprising a central transport channel and two rings, the cytoplasmic and nuclear rings, to which eight filaments are attached. The cytoplasmic filaments have loose ends, while the nuclear filaments are joined in a distal ring, forming a nuclear basket. NPCs are highly dynamic in configuration and composition, and can be devided in 3 subcomplexes, the NUP62 subcomplex, the NUP107-160 subcomplex and the NUP93 subcomplex, containing approximately 30 different nucleoporin proteins. Interacts with MAG5, SEC31A and SEC31B.

The protein localises to the golgi apparatus. Its subcellular location is the endoplasmic reticulum. It localises to the nucleus envelope. The protein resides in the nucleus. It is found in the nuclear pore complex. Functionally, required for protein transport from the endoplasmic reticulum to the Golgi apparatus. In Arabidopsis thaliana (Mouse-ear cress), this protein is Protein transport protein SEC13 homolog B.